The primary structure comprises 198 residues: Cyclin-dependent kinase inhibitor 1B (198 aa).

The segment covering 1–12 (MSNVRVSNGSPT) has biased composition (polar residues). The disordered stretch occupies residues 1–30 (MSNVRVSNGSPTSERRDAKQAEYPKPSACR). Ser-10 is subject to Phosphoserine; by UHMK1. The segment covering 13 to 22 (SERRDAKQAE) has biased composition (basic and acidic residues). The tract at residues 51–91 (DMEEASQNKWNFDFQNHKPLEGKYEWQEVEKGSLPEFYYRP) is interaction with CDK2. The residue at position 74 (Tyr-74) is a Phosphotyrosine; by SRC. Residues 87–198 (FYYRPPRPPK…KKPGLRRRQT (112 aa)) form a disordered region. Tyr-88 carries the post-translational modification Phosphotyrosine; by ABL, LYN and SRC. The residue at position 89 (Tyr-89) is a Phosphotyrosine. The span at 104–113 (QESQDVSGTR) shows a compositional bias: polar residues. Residues 126–137 (EDTHLVDQKTDA) show a composition bias toward basic and acidic residues. The Nuclear localization signal signature appears at 153–169 (KRPATDDSSPQNKRANR). Thr-157 bears the Phosphothreonine; by CaMK1, PKB/AKT1 and PIM1 mark. Thr-170 is subject to Phosphothreonine. A compositionally biased stretch (polar residues) spans 175–186 (SDGSPNAGSVEQ). A Phosphothreonine; by PKB/AKT1, CDK1 and CDK2 modification is found at Thr-187. Position 198 is a phosphothreonine; by CaMK1, PKB/AKT1, RPS6KA1, RPS6KA3 and PIM1 (Thr-198).

Belongs to the CDI family. Forms a ternary complex composed of CCNE1, CDK2 and CDKN1B. Interacts directly with CCNE1; the interaction is inhibited by CDK2-dependent phosphorylation on Thr-187. Interacts with COPS5, subunit of the COP9 signalosome complex; the interaction leads to CDKN1B degradation. Interacts with NUP50; the interaction leads to nuclear import and degradation of phosphorylated CDKN1B. Interacts with CCND1 and SNX6. Interacts (Thr-198-phosphorylated form) with 14-3-3 proteins, binds strongly YWHAQ, weakly YWHAE and YWHAH, but not YWHAB nor YWHAZ; the interaction with YWHAQ results in translocation to the cytoplasm. Interacts with AKT1 and LYN; the interactions lead to cytoplasmic mislocation, phosphorylation of CDKN1B and inhibition of cell cycle arrest. Forms a ternary complex with CCNA2 and CDK2; CDKN1B inhibits the kinase activity of CDK2 through conformational rearrangements. Interacts (unphosphorylated form) with CDK2. Forms a complex with CDK2 and SPDYA, but does not directly interact with SPDYA. Forms a ternary complex composed of cyclin D, CDK4 and CDKN1B. Interacts (phosphorylated on Tyr-88 and Tyr-89) with CDK4; the interaction is required for cyclin D and CDK4 complex assembly, induces nuclear translocation and activates the CDK4 kinase activity. Interacts with GRB2. Interacts with PIM1. Identified in a complex with SKP1, SKP2 and CKS1B. Interacts with UHMK1; the interaction leads to cytoplasmic mislocation, phosphorylation of CDKN1B and inhibition of cell cycle arrest. Also interacts with CDK1. Dephosphorylated on Thr-187 by PPM1H, leading to CDKN1B stability. In terms of processing, phosphorylated; phosphorylation occurs on serine, threonine and tyrosine residues. Phosphorylation on Ser-10 is the major site of phosphorylation in resting cells, takes place at the G(0)-G(1) phase and leads to protein stability. Phosphorylation on other sites is greatly enhanced by mitogens, growth factors, cMYC and in certain cancer cell lines. The phosphorylated form found in the cytoplasm is inactivate. Phosphorylation on Thr-198 is required for interaction with 14-3-3 proteins. Phosphorylation on Thr-187, by CDK1 and CDK2 leads to protein ubiquitination and proteasomal degradation. Tyrosine phosphorylation promotes this process. Phosphorylation by PKB/AKT1 can be suppressed by LY294002, an inhibitor of the catalytic subunit of PI3K. Phosphorylation on Tyr-88 and Tyr-89 has no effect on binding CDK2, but is required for binding CDK4. Dephosphorylated on tyrosine residues by G-CSF. Dephosphorylated on Thr-187 by PPM1H, leading to CDKN1B stability. Ubiquitinated; in the cytoplasm by the KPC complex (composed of RNF123/KPC1 and UBAC1/KPC2) and, in the nucleus, by SCF(SKP2). The latter requires prior phosphorylation on Thr-187. Ubiquitinated; by a TRIM21-containing SCF(SKP2)-like complex; leads to its degradation. Post-translationally, subject to degradation in the lysosome. Interaction with SNX6 promotes lysosomal degradation.

It is found in the nucleus. Its subcellular location is the cytoplasm. The protein resides in the endosome. Its function is as follows. Important regulator of cell cycle progression. Inhibits the kinase activity of CDK2 bound to cyclin A, but has little inhibitory activity on CDK2 bound to SPDYA. Involved in G1 arrest. Potent inhibitor of cyclin E- and cyclin A-CDK2 complexes. Forms a complex with cyclin type D-CDK4 complexes and is involved in the assembly, stability, and modulation of CCND1-CDK4 complex activation. Acts either as an inhibitor or an activator of cyclin type D-CDK4 complexes depending on its phosphorylation state and/or stoichometry. This chain is Cyclin-dependent kinase inhibitor 1B (CDKN1B), found in Canis lupus familiaris (Dog).